Reading from the N-terminus, the 763-residue chain is Phosphoglycerol transferase I (763 aa).

The next 4 helical transmembrane spans lie at 1 to 21 (MSEL…AWKA), 26 to 46 (WWFA…ITLF), 77 to 97 (ILPG…LGWI), and 108 to 128 (FGYS…SPAF).

The protein belongs to the OpgB family.

The protein resides in the cell inner membrane. The enzyme catalyses a phosphatidylglycerol + a membrane-derived-oligosaccharide D-glucose = a 1,2-diacyl-sn-glycerol + a membrane-derived-oligosaccharide 6-(glycerophospho)-D-glucose.. It participates in glycan metabolism; osmoregulated periplasmic glucan (OPG) biosynthesis. Its function is as follows. Transfers a phosphoglycerol residue from phosphatidylglycerol to the membrane-bound nascent glucan backbones. The chain is Phosphoglycerol transferase I from Escherichia coli (strain UTI89 / UPEC).